The sequence spans 396 residues: 1-deoxy-D-xylulose 5-phosphate reductoisomerase (396 aa).

The NADPH site is built by T14, G15, S16, I17, G40, and N128. Position 129 (K129) interacts with 1-deoxy-D-xylulose 5-phosphate. Residue E130 coordinates NADPH. D154 contributes to the Mn(2+) binding site. Residues S155, E156, S180, and H203 each coordinate 1-deoxy-D-xylulose 5-phosphate. Residue E156 coordinates Mn(2+). G209 lines the NADPH pocket. 4 residues coordinate 1-deoxy-D-xylulose 5-phosphate: S216, N221, K222, and E225. E225 is a Mn(2+) binding site.

This sequence belongs to the DXR family. Mg(2+) serves as cofactor. Requires Mn(2+) as cofactor.

The catalysed reaction is 2-C-methyl-D-erythritol 4-phosphate + NADP(+) = 1-deoxy-D-xylulose 5-phosphate + NADPH + H(+). It participates in isoprenoid biosynthesis; isopentenyl diphosphate biosynthesis via DXP pathway; isopentenyl diphosphate from 1-deoxy-D-xylulose 5-phosphate: step 1/6. In terms of biological role, catalyzes the NADPH-dependent rearrangement and reduction of 1-deoxy-D-xylulose-5-phosphate (DXP) to 2-C-methyl-D-erythritol 4-phosphate (MEP). This is 1-deoxy-D-xylulose 5-phosphate reductoisomerase from Xylella fastidiosa (strain 9a5c).